Reading from the N-terminus, the 858-residue chain is Taste receptor type 1 member 3 (858 aa).

The signal sequence occupies residues 1–20; the sequence is MPALAIMGLSLAAFLELGMG. Over 21 to 572 the chain is Extracellular; the sequence is ASLCLSQQFK…RPKFLAWGEP (552 aa). A glycan (N-linked (GlcNAc...) asparagine; when associated with variant T-60) is linked at Asn58. Asn85, Asn130, Asn203, Asn264, Asn379, Asn387, Asn418, Asn439, and Asn482 each carry an N-linked (GlcNAc...) asparagine glycan. A helical membrane pass occupies residues 573–593; the sequence is VVLSLLLLLCLVLGLALAALG. The Cytoplasmic segment spans residues 594-610; that stretch reads LSVHHWDSPLVQASGGS. The chain crosses the membrane as a helical span at residues 611–631; sequence QFCFGLICLGLFCLSVLLFPG. The Extracellular portion of the chain corresponds to 632-644; that stretch reads RPSSASCLAQQPM. Residues 645–665 traverse the membrane as a helical segment; the sequence is AHLPLTGCLSTLFLQAAETFV. At 666-687 the chain is on the cytoplasmic side; that stretch reads ESELPLSWANWLCSYLRGLWAW. A helical membrane pass occupies residues 688 to 708; it reads LVVLLATFVEAALCAWYLIAF. Topologically, residues 709–735 are extracellular; sequence PPEVVTDWSVLPTEVLEHCHVRSWVSL. Residues 736–756 form a helical membrane-spanning segment; that stretch reads GLVHITNAMLAFLCFLGTFLV. The Cytoplasmic portion of the chain corresponds to 757 to 767; that stretch reads QSQPGRYNRAR. Residues 768-788 traverse the membrane as a helical segment; it reads GLTFAMLAYFITWVSFVPLLA. At 789-796 the chain is on the extracellular side; the sequence is NVQVAYQP. Residues 797 to 817 form a helical membrane-spanning segment; the sequence is AVQMGAILVCALGILVTFHLP. The Cytoplasmic portion of the chain corresponds to 818 to 858; it reads KCYVLLWLPKLNTQEFFLGRNAKKAADENSGGGEAAQGHNE.

Belongs to the G-protein coupled receptor 3 family. TAS1R subfamily. Forms homodimers or heterodimers with TAS1R1 and TAS1R2. In terms of processing, the Thr-60 variant is predicted to introduce a novel N-linked glycosylation site at Asn-58. The addition of even a short carbohydrate group at Asn-58 is predicted to disrupt one of the contact surfaces required for stability of a dimer. Therefore a Thr-60 variant N-glycosylated at Asn-58 is predicted to be precluded from forming homodimers or heterodimers. In terms of tissue distribution, expressed in circumvallate, foliate and fungiform taste papillae as well as in taste buds on the palate. Also expressed in testis. Not expressed in brain, heart, kidney, liver or spleen. The topographic distribution in various taste papillae is different from those of other T1R members.

The protein localises to the cell membrane. Its function is as follows. Putative taste receptor. TAS1R1/TAS1R3 responds to the umami taste stimulus (the taste of monosodium glutamate) and also to most of the 20 standard L-amino acids, but not to their D-enantiomers or other compounds. TAS1R2/TAS1R3 recognizes diverse natural and synthetic sweeteners. TAS1R3 is essential for the recognition and response to the disaccharide trehalose. Sequence differences within and between species can significantly influence the selectivity and specificity of taste responses. The polypeptide is Taste receptor type 1 member 3 (Tas1r3) (Mus musculus (Mouse)).